An 88-amino-acid chain; its full sequence is Mitochondrial import inner membrane translocase subunit tim9 (88 aa).

The Twin CX3C motif motif lies at 35–59 (CFTACVDDFTSKALSGRESGCISRC). Cystine bridges form between Cys-35–Cys-59 and Cys-39–Cys-55.

Belongs to the small Tim family. In terms of assembly, heterohexamer; composed of 3 copies of tim9 and 3 copies of tim10, named soluble 70 kDa complex. Associates with the tim22 complex, whose core is composed of tim22 and tim54. Interacts with the transmembrane regions of multi-pass transmembrane proteins in transit.

It localises to the mitochondrion inner membrane. Its function is as follows. Mitochondrial intermembrane chaperone that participates in the import and insertion of multi-pass transmembrane proteins into the mitochondrial inner membrane. Also required for the transfer of beta-barrel precursors from the TOM complex to the sorting and assembly machinery (SAM complex) of the outer membrane. Acts as a chaperone-like protein that protects the hydrophobic precursors from aggregation and guide them through the mitochondrial intermembrane space. The polypeptide is Mitochondrial import inner membrane translocase subunit tim9 (tim9) (Neurospora crassa (strain ATCC 24698 / 74-OR23-1A / CBS 708.71 / DSM 1257 / FGSC 987)).